Reading from the N-terminus, the 117-residue chain is Immunoglobulin heavy variable 1-84 (117 aa).

A signal peptide spans 1–19 (MGWSWIFLFLLSGTAGVHC). Positions 20–49 (QIQLQQSGPELVKPGASVKISCKASGYTFT) are framework-1. The region spanning 31–117 (VKPGASVKIS…EDSAVYFCAR (87 aa)) is the Ig-like domain. Cysteine 41 and cysteine 115 are disulfide-bonded. The tract at residues 50 to 54 (DYYIN) is complementarity-determining-1. Residues 55-68 (WVKQRPGQGLEWIG) are framework-2. Residues 69–85 (WIYPGSGNTKYNEKFKG) form a complementarity-determining-2 region. A framework-3 region spans residues 86-117 (KATLTVDTSSSTAYMQLSSLTSEDSAVYFCAR).

In Mus musculus (Mouse), this protein is Immunoglobulin heavy variable 1-84.